Here is a 461-residue protein sequence, read N- to C-terminus: MEFDTIAAISTPMGEGAIAIVRLSGDEAVAIADKIFKSPGGKSLTTKDSHTIHYGHLVDPKTNEVVEEVMLSLMRGPKTFTREDVVEINCHGGLVSVNRVLQLALTNGARLAEPGEFTKRAFLNGRIDLSQAEAVMDLIRAKTDRAMNVALGQMDGKLSRLIGDLRQALLETLAQVEVNIDYPEYDDVEEMTVPVLVEKCTWVRDEIIKLLQTSSQGKILREGLSTVILGRPNVGKSSLLNSLVQENKAIVTDIAGTTRDIIEEYVNVRGVPLRLVDTAGIRETEDIVERIGVERSREALRGADLILFVLNYADELTAEDERLFETIEAMDYIVIINKTDLPQKINLARVKELAGKHRIVTTSLLQEEGVTELEEAIAALFFEGQIEAGDLTYVSNARHIALLHQAQATVEDAIAAAQAGVPVDMVQIDVTRTWELLGEIIGDTVQESLINQLFSQFCLGK.

Positions 22, 87, and 126 each coordinate (6S)-5-formyl-5,6,7,8-tetrahydrofolate. The region spanning 223-382 (GLSTVILGRP…LEEAIAALFF (160 aa)) is the TrmE-type G domain. Asparagine 233 is a K(+) binding site. Residues 233–238 (NVGKSS), 252–258 (TDIAGTT), and 277–280 (DTAG) contribute to the GTP site. Serine 237 serves as a coordination point for Mg(2+). K(+) contacts are provided by threonine 252, isoleucine 254, and threonine 257. Threonine 258 is a binding site for Mg(2+). Residue lysine 461 participates in (6S)-5-formyl-5,6,7,8-tetrahydrofolate binding.

It belongs to the TRAFAC class TrmE-Era-EngA-EngB-Septin-like GTPase superfamily. TrmE GTPase family. In terms of assembly, homodimer. Heterotetramer of two MnmE and two MnmG subunits. K(+) serves as cofactor.

It is found in the cytoplasm. Its function is as follows. Exhibits a very high intrinsic GTPase hydrolysis rate. Involved in the addition of a carboxymethylaminomethyl (cmnm) group at the wobble position (U34) of certain tRNAs, forming tRNA-cmnm(5)s(2)U34. The sequence is that of tRNA modification GTPase MnmE from Lysinibacillus sphaericus (strain C3-41).